Reading from the N-terminus, the 593-residue chain is Uncoordinated protein 58 (593 aa).

Helical transmembrane passes span 186–206 (VILV…LMLL), 291–311 (TFPT…YGEV), 320–340 (VFSV…AADI), 402–422 (PIGA…AMFI), 430–450 (FIHA…GDIV), and 455–475 (IFLS…TMCV).

It belongs to the two pore domain potassium channel (TC 1.A.1.8) family.

It is found in the membrane. In terms of biological role, has a role in mobility, possibly in the transport of potassium in muscles. In Caenorhabditis briggsae, this protein is Uncoordinated protein 58.